The primary structure comprises 311 residues: DNA replication terminus site-binding protein (311 aa).

The protein belongs to the Tus family.

Its subcellular location is the cytoplasm. Trans-acting protein required for termination of DNA replication. Binds to DNA replication terminator sequences (terA to terF) to prevent the passage of replication forks. The termination efficiency will be affected by the affinity of this protein for the terminator sequence. This chain is DNA replication terminus site-binding protein, found in Yersinia pestis.